A 985-amino-acid polypeptide reads, in one-letter code: Bifunctional glutamine synthetase adenylyltransferase/adenylyl-removing enzyme (985 aa).

An adenylyl removase region spans residues 1-472 (MTSSAPGNAD…HYARLFEGDP (472 aa)). An adenylyl transferase region spans residues 477 to 985 (SLPPVNYGAG…RRVFTSLLEE (509 aa)).

Belongs to the GlnE family. Requires Mg(2+) as cofactor.

It catalyses the reaction [glutamine synthetase]-O(4)-(5'-adenylyl)-L-tyrosine + phosphate = [glutamine synthetase]-L-tyrosine + ADP. The enzyme catalyses [glutamine synthetase]-L-tyrosine + ATP = [glutamine synthetase]-O(4)-(5'-adenylyl)-L-tyrosine + diphosphate. Involved in the regulation of glutamine synthetase GlnA, a key enzyme in the process to assimilate ammonia. When cellular nitrogen levels are high, the C-terminal adenylyl transferase (AT) inactivates GlnA by covalent transfer of an adenylyl group from ATP to specific tyrosine residue of GlnA, thus reducing its activity. Conversely, when nitrogen levels are low, the N-terminal adenylyl removase (AR) activates GlnA by removing the adenylyl group by phosphorolysis, increasing its activity. The regulatory region of GlnE binds the signal transduction protein PII (GlnB) which indicates the nitrogen status of the cell. In Bradyrhizobium sp. (strain BTAi1 / ATCC BAA-1182), this protein is Bifunctional glutamine synthetase adenylyltransferase/adenylyl-removing enzyme.